Here is a 267-residue protein sequence, read N- to C-terminus: Strigolactone esterase RMS3 (267 aa).

The active-site Nucleophile is serine 96. Catalysis depends on residues aspartate 218 and histidine 247.

This sequence belongs to the AB hydrolase superfamily.

The protein resides in the cytoplasm. It localises to the nucleus. Its function is as follows. Involved in strigolactone signaling pathway. Functions downstream of strigolactone synthesis, as a component of hormone signaling and as an enzyme that participates in the conversion of strigolactones to the bioactive form. Binds and hydrolyzes the synthetic strigolactone analog GR24 and its enantiomers in vitro. Forms a stable covalent complex with the D-ring of strigolactone, which is essential for hormone bioactivity. The D-ring is attached to His-247 of the catalytic triad. The hydrolysis of strigolactone into a covalently linked intermediate molecule is required to trigger strigolactone signaling. This mechanism defines RMS3 as a non-canonical hormone receptor with dual functions to generate and sense the active form of strigolactone. Strigolactones are hormones that inhibit tillering and shoot branching through the MAX-dependent pathway, contribute to the regulation of shoot architectural response to phosphate-limiting conditions and function as rhizosphere signal that stimulates hyphal branching of arbuscular mycorrhizal fungi and trigger seed germination of root parasitic weeds. This is Strigolactone esterase RMS3 from Pisum sativum (Garden pea).